A 478-amino-acid chain; its full sequence is Transposase for insertion sequence element IS231B (478 aa).

It belongs to the transposase 11 family.

Its function is as follows. Involved in the transposition of the insertion sequence. The polypeptide is Transposase for insertion sequence element IS231B (Bacillus thuringiensis subsp. berliner).